We begin with the raw amino-acid sequence, 249 residues long: 3-deoxy-manno-octulosonate cytidylyltransferase (249 aa).

This sequence belongs to the KdsB family.

It is found in the cytoplasm. The enzyme catalyses 3-deoxy-alpha-D-manno-oct-2-ulosonate + CTP = CMP-3-deoxy-beta-D-manno-octulosonate + diphosphate. It functions in the pathway nucleotide-sugar biosynthesis; CMP-3-deoxy-D-manno-octulosonate biosynthesis; CMP-3-deoxy-D-manno-octulosonate from 3-deoxy-D-manno-octulosonate and CTP: step 1/1. Its pathway is bacterial outer membrane biogenesis; lipopolysaccharide biosynthesis. Its function is as follows. Activates KDO (a required 8-carbon sugar) for incorporation into bacterial lipopolysaccharide in Gram-negative bacteria. The chain is 3-deoxy-manno-octulosonate cytidylyltransferase from Coxiella burnetii (strain RSA 331 / Henzerling II).